Here is a 178-residue protein sequence, read N- to C-terminus: MAEAIIPAAELSIKTLQNIVEGITGVDRKIAIGFKNLTDYTLENLGVYFNSGSSDRSIAYKINAQEALLFSARKSDHTARGTVGTFSYYIQDEDKTVHVMWSVPFDYNLYSNWWNIAVVDGRQPPDSNVHDNLYNGSGGMPYPNKPDQYINNEQKGFHLFGSMTNNGQATIEVELKKA.

5 residues coordinate phosphocholine: S51, V83, S102, P104, and Y134. The segment at 101-117 is trp-rich region; that stretch reads WSVPFDYNLYSNWWNIA.

This sequence belongs to the actinoporin family. Plant subfamily.

Inhibited by sphingomyelin. Its function is as follows. Actinoporin-related protein having hemolytic activity in vitro. Binds probably a phosphocholine derivative with the unique amido or hydroxyl groups found in sphingomyelin. Involved in drought tolerance. The polypeptide is Bryoporin (Physcomitrium patens (Spreading-leaved earth moss)).